The following is a 211-amino-acid chain: MTLELLKKYFPALTDDQISKFEKLEELYKDWNLKINVVSRKDIDELYLRHILHSLGIVKVQSFNPGSKILDVGTGGGFPGIPLAIMHPESAFHLVDSIGKKIKVVDEVSEGLGLENVTSFNQRVEELNGNYDFIVSRAVAVMPTFVRWVKGKIAKENVHERKNGILYLKGGDLSDELKDYRTAKIFELSDYFEEDFFQTKKVVYLPMKYKG.

S-adenosyl-L-methionine is bound by residues Gly-73, Phe-78, 124–125 (VE), and Arg-137.

This sequence belongs to the methyltransferase superfamily. RNA methyltransferase RsmG family.

It is found in the cytoplasm. Its function is as follows. Specifically methylates the N7 position of a guanine in 16S rRNA. The sequence is that of Ribosomal RNA small subunit methyltransferase G from Christiangramia forsetii (strain DSM 17595 / CGMCC 1.15422 / KT0803) (Gramella forsetii).